Reading from the N-terminus, the 154-residue chain is UPF0178 protein Glov_0658 (154 aa).

This sequence belongs to the UPF0178 family.

The polypeptide is UPF0178 protein Glov_0658 (Trichlorobacter lovleyi (strain ATCC BAA-1151 / DSM 17278 / SZ) (Geobacter lovleyi)).